The sequence spans 247 residues: 6-carboxyhexanoate--CoA ligase (247 aa).

Belongs to the BioW family. In terms of assembly, homodimer. Requires Mg(2+) as cofactor.

The catalysed reaction is heptanedioate + ATP + CoA = 6-carboxyhexanoyl-CoA + AMP + diphosphate. The protein operates within metabolic intermediate metabolism; pimeloyl-CoA biosynthesis; pimeloyl-CoA from pimelate: step 1/1. In terms of biological role, catalyzes the transformation of pimelate into pimeloyl-CoA with concomitant hydrolysis of ATP to AMP. The sequence is that of 6-carboxyhexanoate--CoA ligase from Corynebacterium diphtheriae (strain ATCC 700971 / NCTC 13129 / Biotype gravis).